A 185-amino-acid polypeptide reads, in one-letter code: MISVNDFRTGLTIAVDNGLWQVLDFQHVKPGKGAAFVRSKLRNLRTGSVQEKTFRAGEKVEKAHIENRRMQYLYASGESHVFMDNGTYEQIELGEKQIERELKFLKENMEVSIMTYQGEVLGVELPNTVELQVTETEPGIKGDTASNVTKPATLETGLVVQVPIFINEGETLIINTGEGKYVSRA.

This sequence belongs to the elongation factor P family.

The protein localises to the cytoplasm. It functions in the pathway protein biosynthesis; polypeptide chain elongation. Its function is as follows. Involved in peptide bond synthesis. Stimulates efficient translation and peptide-bond synthesis on native or reconstituted 70S ribosomes in vitro. Probably functions indirectly by altering the affinity of the ribosome for aminoacyl-tRNA, thus increasing their reactivity as acceptors for peptidyl transferase. In Bacillus cereus (strain ATCC 10987 / NRS 248), this protein is Elongation factor P.